A 386-amino-acid chain; its full sequence is Succinate--CoA ligase [ADP-forming] subunit beta (386 aa).

Positions 9–244 (KDLLTSYAIP…PSQENVRDVL (236 aa)) constitute an ATP-grasp domain. ATP contacts are provided by residues Lys46, 53-55 (GRG), Val102, and Glu107. Positions 199 and 213 each coordinate Mg(2+). Residues Asn264 and 321-323 (GIM) contribute to the substrate site.

The protein belongs to the succinate/malate CoA ligase beta subunit family. In terms of assembly, heterotetramer of two alpha and two beta subunits. Requires Mg(2+) as cofactor.

It catalyses the reaction succinate + ATP + CoA = succinyl-CoA + ADP + phosphate. It carries out the reaction GTP + succinate + CoA = succinyl-CoA + GDP + phosphate. The protein operates within carbohydrate metabolism; tricarboxylic acid cycle; succinate from succinyl-CoA (ligase route): step 1/1. In terms of biological role, succinyl-CoA synthetase functions in the citric acid cycle (TCA), coupling the hydrolysis of succinyl-CoA to the synthesis of either ATP or GTP and thus represents the only step of substrate-level phosphorylation in the TCA. The beta subunit provides nucleotide specificity of the enzyme and binds the substrate succinate, while the binding sites for coenzyme A and phosphate are found in the alpha subunit. This is Succinate--CoA ligase [ADP-forming] subunit beta from Chlamydia abortus (strain DSM 27085 / S26/3) (Chlamydophila abortus).